A 500-amino-acid polypeptide reads, in one-letter code: L-arabinose isomerase (500 aa).

Positions 306, 333, 350, and 450 each coordinate Mn(2+).

The protein belongs to the arabinose isomerase family. Homohexamer. The cofactor is Mn(2+).

The enzyme catalyses beta-L-arabinopyranose = L-ribulose. Its pathway is carbohydrate degradation; L-arabinose degradation via L-ribulose; D-xylulose 5-phosphate from L-arabinose (bacterial route): step 1/3. Functionally, catalyzes the conversion of L-arabinose to L-ribulose. In Klebsiella pneumoniae subsp. pneumoniae (strain ATCC 700721 / MGH 78578), this protein is L-arabinose isomerase.